A 695-amino-acid polypeptide reads, in one-letter code: Elongation factor G (695 aa).

Residues 9–283 form the tr-type G domain; the sequence is EKIRNIGIVA…AVIDYLPSPL (275 aa). Residues 18-25, 82-86, and 136-139 contribute to the GTP site; these read AHIDAGKT, DTPGH, and NKMD.

Belongs to the TRAFAC class translation factor GTPase superfamily. Classic translation factor GTPase family. EF-G/EF-2 subfamily.

The protein localises to the cytoplasm. In terms of biological role, catalyzes the GTP-dependent ribosomal translocation step during translation elongation. During this step, the ribosome changes from the pre-translocational (PRE) to the post-translocational (POST) state as the newly formed A-site-bound peptidyl-tRNA and P-site-bound deacylated tRNA move to the P and E sites, respectively. Catalyzes the coordinated movement of the two tRNA molecules, the mRNA and conformational changes in the ribosome. This Petrotoga mobilis (strain DSM 10674 / SJ95) protein is Elongation factor G.